Here is a 210-residue protein sequence, read N- to C-terminus: Phosphoenolpyruvate guanylyltransferase (210 aa).

Phosphoenolpyruvate contacts are provided by Thr130, Gly146, and Ser149.

Belongs to the CofC family.

The catalysed reaction is phosphoenolpyruvate + GTP + H(+) = enolpyruvoyl-2-diphospho-5'-guanosine + diphosphate. It participates in cofactor biosynthesis; coenzyme F420 biosynthesis. Functionally, guanylyltransferase that catalyzes the activation of phosphoenolpyruvate (PEP) as enolpyruvoyl-2-diphospho-5'-guanosine, via the condensation of PEP with GTP. It is involved in the biosynthesis of coenzyme F420, a hydride carrier cofactor. The polypeptide is Phosphoenolpyruvate guanylyltransferase (Roseiflexus castenholzii (strain DSM 13941 / HLO8)).